We begin with the raw amino-acid sequence, 1049 residues long: MRESVRKVLVIGSGPIKIAEAAEFDYSGSQALKALKEEGIETILVNSNVATVQTSRKFADKLYMIPVTWWAVEKVIERERPDGIMVGFGGQTALNVGVDLYNKGILQKYGVKVLGTPIEGIERALSREKFRETMINVGLPVPPSLSARSEEEALEKARQIGYPVMVRVSFNLGGRGSIVAWNEEELKRDIGRALSQSYIHEVLIEKYLHHWIELEYEVMRDKYGNSAVIACIENLDPMGVHTGESTVISPCQTLDNKEFQDMRFMSMDVAKSIDLVGECNVQFALDPKGYNYYVIETNPRMSRSSALASKATGYPLAYVSAKLALGYSLYEVLNKVSGSTCACFEPSLDYVVIKIPRWDLDKFENVEISLASEMKSVGEVMSIGRSFEESLQKAVRMLDIGEPGVVGGKIYFSKMTKEDALKNLKMRRPYWFLYAAKAFKEGATIDEVYEVTGINKFFLNKIKALVEFYEILRKQRNIDKDTLLQAKKLGFSDLQLAKALGVKESDIRKLREKWNIEPKVKQIDTLAGEWPAVTNYLYLTYNGTEDDIEFSEAGNKLLIIGAGGFRIGVSVEFDWSVVSLLDSSLKYFNDIAILNYNPETVSTDWDIARKLYFDEISVERVLDLIRKEKFTYVATFTGGQIGNNISKKLEEEGIRLLGTSGRSIDTAEDREKFSKLLDKLGIKQPEWISARSLEEVKEFISKVGYPVLIRPSYVLSGAAMKIVNNDLELMEYLKRATEVSPEHPVVISKYLNDAIEAEIDAAGDGKGVYGVVIEHVEEAGVHSGDATMSIPYRKLSSNVVNKMKENVHMIVRELEIKGPFNVQFVIKNNEPYIIELNLRASRSMPFSSKVVSKNIISLALDGILNGFGVDEFIELKPKSWGVKSPQFSWAQLKGAYPFLGPEMKSTGEAASLGTDFYDALLKSWLSSSPNKIPNKEGIALVYGTTNVEYLKIAAKNLIDYGITVYTLSEASIGIEEKSINDIIELIKNRKVEIVVTDGYLKHIDYEVRRIAVDYNIPIILNGRLGAEVTRAFSHPNVTYYEISEYGAGI.

Residues 1–399 are carboxyphosphate synthetic domain; the sequence is MRESVRKVLV…SLQKAVRMLD (399 aa). Residues R127, R167, G173, G174, K206, L208, E213, G239, V240, H241, Q282, and E296 each contribute to the ATP site. Positions 131 to 325 constitute an ATP-grasp 1 domain; the sequence is RETMINVGLP…LAYVSAKLAL (195 aa). Residues Q282, E296, and N298 each contribute to the Mg(2+) site. Mn(2+)-binding residues include Q282, E296, and N298. The interval 400–548 is oligomerization domain; that stretch reads IGEPGVVGGK…LTYNGTEDDI (149 aa). The interval 549–930 is carbamoyl phosphate synthetic domain; it reads EFSEAGNKLL…LKSWLSSSPN (382 aa). Residues 674–864 enclose the ATP-grasp 2 domain; sequence SKLLDKLGIK…IISLALDGIL (191 aa). Residues R710, K749, L751, E756, G780, V781, H782, S783, Q823, and E835 each coordinate ATP. Positions 823, 835, and 837 each coordinate Mg(2+). Mn(2+) is bound by residues Q823, E835, and N837. One can recognise an MGS-like domain in the interval 930 to 1049; sequence NKIPNKEGIA…YEISEYGAGI (120 aa). The tract at residues 931–1049 is allosteric domain; the sequence is KIPNKEGIAL…YEISEYGAGI (119 aa).

The protein belongs to the CarB family. Composed of two chains; the small (or glutamine) chain promotes the hydrolysis of glutamine to ammonia, which is used by the large (or ammonia) chain to synthesize carbamoyl phosphate. Tetramer of heterodimers (alpha,beta)4. Mg(2+) serves as cofactor. The cofactor is Mn(2+).

It catalyses the reaction hydrogencarbonate + L-glutamine + 2 ATP + H2O = carbamoyl phosphate + L-glutamate + 2 ADP + phosphate + 2 H(+). The catalysed reaction is hydrogencarbonate + NH4(+) + 2 ATP = carbamoyl phosphate + 2 ADP + phosphate + 2 H(+). It participates in amino-acid biosynthesis; L-arginine biosynthesis; carbamoyl phosphate from bicarbonate: step 1/1. Its pathway is pyrimidine metabolism; UMP biosynthesis via de novo pathway; (S)-dihydroorotate from bicarbonate: step 1/3. Its function is as follows. Large subunit of the glutamine-dependent carbamoyl phosphate synthetase (CPSase). CPSase catalyzes the formation of carbamoyl phosphate from the ammonia moiety of glutamine, carbonate, and phosphate donated by ATP, constituting the first step of 2 biosynthetic pathways, one leading to arginine and/or urea and the other to pyrimidine nucleotides. The large subunit (synthetase) binds the substrates ammonia (free or transferred from glutamine from the small subunit), hydrogencarbonate and ATP and carries out an ATP-coupled ligase reaction, activating hydrogencarbonate by forming carboxy phosphate which reacts with ammonia to form carbamoyl phosphate. The chain is Carbamoyl phosphate synthase large chain from Sulfurisphaera tokodaii (strain DSM 16993 / JCM 10545 / NBRC 100140 / 7) (Sulfolobus tokodaii).